The primary structure comprises 188 residues: Threonylcarbamoyl-AMP synthase (188 aa).

The 186-residue stretch at 3–188 folds into the YrdC-like domain; that stretch reads QLHPSEIKDL…RSGKILRNGQ (186 aa).

This sequence belongs to the SUA5 family. TsaC subfamily.

Its subcellular location is the cytoplasm. It catalyses the reaction L-threonine + hydrogencarbonate + ATP = L-threonylcarbamoyladenylate + diphosphate + H2O. Functionally, required for the formation of a threonylcarbamoyl group on adenosine at position 37 (t(6)A37) in tRNAs that read codons beginning with adenine. Catalyzes the conversion of L-threonine, HCO(3)(-)/CO(2) and ATP to give threonylcarbamoyl-AMP (TC-AMP) as the acyladenylate intermediate, with the release of diphosphate. This chain is Threonylcarbamoyl-AMP synthase, found in Shewanella sp. (strain ANA-3).